The chain runs to 335 residues: Phosphate acyltransferase (335 aa).

This sequence belongs to the PlsX family. In terms of assembly, homodimer. Probably interacts with PlsY.

Its subcellular location is the cytoplasm. It carries out the reaction a fatty acyl-[ACP] + phosphate = an acyl phosphate + holo-[ACP]. Its pathway is lipid metabolism; phospholipid metabolism. In terms of biological role, catalyzes the reversible formation of acyl-phosphate (acyl-PO(4)) from acyl-[acyl-carrier-protein] (acyl-ACP). This enzyme utilizes acyl-ACP as fatty acyl donor, but not acyl-CoA. The polypeptide is Phosphate acyltransferase (Streptococcus pyogenes serotype M18 (strain MGAS8232)).